A 155-amino-acid polypeptide reads, in one-letter code: Urease accessory protein UreE (155 aa).

This sequence belongs to the UreE family.

It is found in the cytoplasm. Its function is as follows. Involved in urease metallocenter assembly. Binds nickel. Probably functions as a nickel donor during metallocenter assembly. The sequence is that of Urease accessory protein UreE from Deinococcus radiodurans (strain ATCC 13939 / DSM 20539 / JCM 16871 / CCUG 27074 / LMG 4051 / NBRC 15346 / NCIMB 9279 / VKM B-1422 / R1).